The chain runs to 503 residues: Maturase K (503 aa).

This sequence belongs to the intron maturase 2 family. MatK subfamily.

The protein localises to the plastid. It localises to the chloroplast. Functionally, usually encoded in the trnK tRNA gene intron. Probably assists in splicing its own and other chloroplast group II introns. The chain is Maturase K from Caragana arborescens (Siberian pea tree).